Consider the following 487-residue polypeptide: Glutamyl-tRNA(Gln) amidotransferase subunit A (487 aa).

Active-site charge relay system residues include lysine 74 and serine 149. The active-site Acyl-ester intermediate is the serine 173.

This sequence belongs to the amidase family. GatA subfamily. In terms of assembly, heterotrimer of A, B and C subunits.

It catalyses the reaction L-glutamyl-tRNA(Gln) + L-glutamine + ATP + H2O = L-glutaminyl-tRNA(Gln) + L-glutamate + ADP + phosphate + H(+). Allows the formation of correctly charged Gln-tRNA(Gln) through the transamidation of misacylated Glu-tRNA(Gln) in organisms which lack glutaminyl-tRNA synthetase. The reaction takes place in the presence of glutamine and ATP through an activated gamma-phospho-Glu-tRNA(Gln). The chain is Glutamyl-tRNA(Gln) amidotransferase subunit A from Synechococcus sp. (strain CC9311).